The following is a 389-amino-acid chain: E3 ubiquitin-protein ligase E3D (389 aa).

A2 carries the post-translational modification N-acetylalanine. A BRAT1-like motif motif is present at residues 129-159; the sequence is PLPSENWGALVGEWCCHPDPFANKSLHPQEN. C144 is a binding site for Zn(2+). The tract at residues 235-257 is interaction with UBE2C; sequence QSSERSFPIIPRSWFVQSVIAQC. The HECT-like stretch occupies residues 353–389; sequence LPSATCLELLLILSKSNANLPSSLRRVNSFQVAFLKM.

As to quaternary structure, interacts with UBE2C/UbcH10 (E2 ubiquitin-conjugating enzyme). In vitro, interacts with cyclin-B. Ubiquitinated by UBCH10 (E2 ubiquitin-conjugating enzyme).

It localises to the cytoplasm. The enzyme catalyses S-ubiquitinyl-[E2 ubiquitin-conjugating enzyme]-L-cysteine + [acceptor protein]-L-lysine = [E2 ubiquitin-conjugating enzyme]-L-cysteine + N(6)-ubiquitinyl-[acceptor protein]-L-lysine.. Its pathway is protein modification; protein ubiquitination. E3 ubiquitin-protein ligase which accepts ubiquitin from specific E2 ubiquitin-conjugating enzymes, and transfers it to substrates, generally promoting their degradation by the proteasome. Independently of its E3 ubiquitin-protein ligase activity, acts as an inhibitor of CPSF3 endonuclease activity by blocking CPSF3 active site. The sequence is that of E3 ubiquitin-protein ligase E3D (UBE3D) from Homo sapiens (Human).